The sequence spans 483 residues: Protein PLASTID TRANSCRIPTIONALLY ACTIVE 14 (483 aa).

A chloroplast-targeting transit peptide spans 1–62 (MASSVSLQFL…TQPFPLFQSP (62 aa)). Residues 80 to 325 (YKIGYVRSVR…KGEEMTINYM (246 aa)) enclose the SET domain. S-adenosyl-L-methionine is bound at residue Y324.

This sequence belongs to the class V-like SAM-binding methyltransferase superfamily. Component of the transcriptionally active chromosome (TAC) complexes. Interacts with PTAC12/HMR/PAP5 and PTAC7. Binds to SL1/MTERF3. In terms of tissue distribution, mostly expressed in leaves, flowers and seedlings, and, to a lower extent, in stems and roots.

The protein resides in the plastid. It is found in the chloroplast thylakoid. Functionally, essential for chloroplast development, especially for thylakoid formation. Involved in plastid gene expression, probably by maintaining plastid-encoded RNA polymerase (PEP) activity. The chain is Protein PLASTID TRANSCRIPTIONALLY ACTIVE 14 from Arabidopsis thaliana (Mouse-ear cress).